A 170-amino-acid chain; its full sequence is Bifunctional protein PyrR (170 aa).

The PRPP-binding signature appears at Leu90–Thr102.

The protein belongs to the purine/pyrimidine phosphoribosyltransferase family. PyrR subfamily.

The enzyme catalyses UMP + diphosphate = 5-phospho-alpha-D-ribose 1-diphosphate + uracil. Its function is as follows. Regulates the transcription of the pyrimidine nucleotide (pyr) operon in response to exogenous pyrimidines. In terms of biological role, also displays a weak uracil phosphoribosyltransferase activity which is not physiologically significant. This is Bifunctional protein PyrR from Pseudomonas syringae pv. syringae (strain B728a).